Consider the following 750-residue polypeptide: Photosystem I P700 chlorophyll a apoprotein A1 (750 aa).

8 helical membrane passes run 70–93, 156–179, 195–219, 291–309, 346–369, 385–411, 433–455, and 531–549; these read VFSA…FHGA, LYCT…FHYH, LNHH…HVSL, IAHH…GHMY, WHAQ…HHMY, LSLF…IFMV, AIIS…LYIH, and FLVH…LILL. [4Fe-4S] cluster is bound by residues cysteine 573 and cysteine 582. 2 helical membrane passes run 589-610 and 664-686; these read HVFL…HFSW and LSAY…MFLF. Histidine 675 contributes to the chlorophyll a' binding site. Chlorophyll a is bound by residues methionine 683 and tyrosine 691. Tryptophan 692 serves as a coordination point for phylloquinone. The chain crosses the membrane as a helical span at residues 724–744; that stretch reads AVGVTHYLLGGIATTWAFFLA.

The protein belongs to the PsaA/PsaB family. In terms of assembly, the PsaA/B heterodimer binds the P700 chlorophyll special pair and subsequent electron acceptors. PSI consists of a core antenna complex that captures photons, and an electron transfer chain that converts photonic excitation into a charge separation. The eukaryotic PSI reaction center is composed of at least 11 subunits. Requires P700 is a chlorophyll a/chlorophyll a' dimer, A0 is one or more chlorophyll a, A1 is one or both phylloquinones and FX is a shared 4Fe-4S iron-sulfur center. as cofactor.

Its subcellular location is the plastid. It localises to the chloroplast thylakoid membrane. It catalyses the reaction reduced [plastocyanin] + hnu + oxidized [2Fe-2S]-[ferredoxin] = oxidized [plastocyanin] + reduced [2Fe-2S]-[ferredoxin]. PsaA and PsaB bind P700, the primary electron donor of photosystem I (PSI), as well as the electron acceptors A0, A1 and FX. PSI is a plastocyanin-ferredoxin oxidoreductase, converting photonic excitation into a charge separation, which transfers an electron from the donor P700 chlorophyll pair to the spectroscopically characterized acceptors A0, A1, FX, FA and FB in turn. Oxidized P700 is reduced on the lumenal side of the thylakoid membrane by plastocyanin. The sequence is that of Photosystem I P700 chlorophyll a apoprotein A1 from Solanum bulbocastanum (Wild potato).